The primary structure comprises 487 residues: ATP-dependent RNA helicase DBP3 (487 aa).

The tract at residues 1-40 is disordered; it reads MAKRSRNMESNSERSSRPKKKSKGDAKPEQPPYVQSAELD. Residues 71–98 carry the Q motif motif; sequence TAFSYLPSDSNQLYGPLEHFSKPTPIQS. The Helicase ATP-binding domain occupies 101-276; it reads WPYLFAGRDV…TTFMKEPVTV (176 aa). 114-121 is a binding site for ATP; the sequence is AETGSGKT. The short motif at 222-225 is the DEAD box element; it reads DEAD. Residues 291–456 enclose the Helicase C-terminal domain; that stretch reads RIKQIVEVVK…DIPEALLKFG (166 aa).

This sequence belongs to the DEAD box helicase family. DDX5/DBP2 subfamily.

It is found in the nucleus. Its subcellular location is the nucleolus. The catalysed reaction is ATP + H2O = ADP + phosphate + H(+). Its function is as follows. ATP-dependent RNA helicase required for 60S ribosomal subunit synthesis. Involved in efficient pre-rRNA processing, predominantly at site A3, which is necessary for the normal formation of 25S and 5.8S rRNAs. This Ajellomyces capsulatus (strain NAm1 / WU24) (Darling's disease fungus) protein is ATP-dependent RNA helicase DBP3 (DBP3).